The chain runs to 1187 residues: Nicotinate dehydrogenase subunit B (1187 aa).

Residues 764–784 form a helical membrane-spanning segment; the sequence is WWFGSLAGVFGAALGMLATAL. 3 Cytochrome c domains span residues 804–907, 949–1057, and 1075–1163; these read AMLE…MSQT, AQWN…SSLE, and VSLS…RHRF. 9 residues coordinate heme c: cysteine 818, cysteine 821, histidine 822, cysteine 964, cysteine 967, histidine 968, cysteine 1088, cysteine 1091, and histidine 1092.

Mo-molybdopterin cytosine dinucleotide serves as cofactor.

It is found in the membrane. It carries out the reaction 2 Fe(III)-[cytochrome] + nicotinate + H2O = 2 Fe(II)-[cytochrome] + 6-hydroxynicotinate + 2 H(+). It functions in the pathway cofactor degradation; nicotinate degradation. Functionally, subunit of the two-component enzyme NicAB that mediates nicotinate hydroxylation, the first step in the aerobic nicotinate degradation pathway. Mediates conversion of nicotinate into 6-hydroxynicotinate (6HNA). This Pseudomonas putida (strain ATCC 47054 / DSM 6125 / CFBP 8728 / NCIMB 11950 / KT2440) protein is Nicotinate dehydrogenase subunit B (nicB).